We begin with the raw amino-acid sequence, 667 residues long: Homeobox protein 3 (667 aa).

Disordered stretches follow at residues 44–108 (FFQP…NSSI), 179–232 (NNNN…TVYN), 249–268 (NNNN…VNNN), and 331–418 (STNK…YQKQ). Over residues 52 to 63 (LPPPTNQQPQPQ) the composition is skewed to pro residues. Residues 75 to 96 (CNSSFENSPQQPTSPLLISSQT) show a composition bias toward polar residues. The span at 97-108 (SYPSDLSSNSSI) shows a compositional bias: low complexity. Residues 334–343 (KRMKISHHSH) are compositionally biased toward basic residues. A compositionally biased stretch (low complexity) spans 344 to 379 (SLSNNNENSLSQPYFNNNNNNNNENENVYNIVNEQN). Over residues 380 to 390 (PTFNPNQSNTH) the composition is skewed to polar residues. Residues 386 to 454 (QSNTHQQQEE…ENENVICSEF (69 aa)) are a coiled coil. Positions 602-664 (EFKSRRILSE…NKRMRDKSNK (63 aa)) form a DNA-binding region, homeobox.

Its subcellular location is the nucleus. Its function is as follows. Putative transcription factor. The sequence is that of Homeobox protein 3 (hbx3) from Dictyostelium discoideum (Social amoeba).